A 763-amino-acid chain; its full sequence is Putative pentatricopeptide repeat-containing protein At1g74580 (763 aa).

PPR repeat units lie at residues 39–69, 75–109, 110–144, 145–179, 180–214, 215–249, 250–284, 285–319, 320–354, 355–389, 390–424, 425–459, 460–494, 495–529, 530–564, 565–595, 601–635, 636–670, and 671–705; these read TLSTYRSVIEKLGYYGKFEAMEEVLVDMREN, LEGVYVGAMKNYGRKGKVQEAVNVFERMDFYDCEP, TVFSYNAIMSVLVDSGYFDQAHKVYMRMRDRGITP, DVYSFTIRMKSFCKTSRPHAALRLLNNMSSQGCEM, NVVAYCTVVGGFYEENFKAEGYELFGKMLASGVSL, CLSTFNKLLRVLCKKGDVKECEKLLDKVIKRGVLP, NLFTYNLFIQGLCQRGELDGAVRMVGCLIEQGPKP, DVITYNNLIYGLCKNSKFQEAEVYLGKMVNEGLEP, DSYTYNTLIAGYCKGGMVQLAERIVGDAVFNGFVP, DQFTYRSLIDGLCHEGETNRALALFNEALGKGIKP, NVILYNTLIKGLSNQGMILEAAQLANEMSEKGLIP, EVQTFNILVNGLCKMGCVSDADGLVKVMISKGYFP, DIFTFNILIHGYSTQLKMENALEILDVMLDNGVDP, DVYTYNSLLNGLCKTSKFEDVMETYKTMVEKGCAP, NLFTFNILLESLCRYRKLDEALGLLEEMKNKSVNP, DAVTFGTLIDGFCKNGDLDGAYTLFRKMEEA, STPTYNIIIHAFTEKLNVTMAEKLFQEMVDRCLGP, DGYTYRLMVDGFCKTGNVNLGYKFLLEMMENGFIP, and SLTTLGRVINCLCVEDRVYEAAGIIHRMVQKGLVP.

It belongs to the PPR family. P subfamily.

In Arabidopsis thaliana (Mouse-ear cress), this protein is Putative pentatricopeptide repeat-containing protein At1g74580.